The primary structure comprises 103 residues: Small ribosomal subunit protein uS10 (103 aa).

Belongs to the universal ribosomal protein uS10 family. In terms of assembly, part of the 30S ribosomal subunit.

Functionally, involved in the binding of tRNA to the ribosomes. In Chlorobaculum tepidum (strain ATCC 49652 / DSM 12025 / NBRC 103806 / TLS) (Chlorobium tepidum), this protein is Small ribosomal subunit protein uS10.